Consider the following 38-residue polypeptide: Cytochrome b6-f complex subunit 5 (38 aa).

Residues 5–25 traverse the membrane as a helical segment; sequence LLLGIVLGLIPVTLAGLFVAA.

This sequence belongs to the PetG family. The 4 large subunits of the cytochrome b6-f complex are cytochrome b6, subunit IV (17 kDa polypeptide, PetD), cytochrome f and the Rieske protein, while the 4 small subunits are PetG, PetL, PetM and PetN. The complex functions as a dimer.

It localises to the cellular thylakoid membrane. Component of the cytochrome b6-f complex, which mediates electron transfer between photosystem II (PSII) and photosystem I (PSI), cyclic electron flow around PSI, and state transitions. PetG is required for either the stability or assembly of the cytochrome b6-f complex. This chain is Cytochrome b6-f complex subunit 5, found in Picosynechococcus sp. (strain ATCC 27264 / PCC 7002 / PR-6) (Agmenellum quadruplicatum).